Reading from the N-terminus, the 938-residue chain is Glutamate receptor ionotropic, NMDA 1 (938 aa).

The first 18 residues, 1-18, serve as a signal peptide directing secretion; it reads MSTMRLLTLALLFSCSVA. Residues 19–559 are Extracellular-facing; the sequence is RAACDPKIVN…TLDSFMQPFQ (541 aa). Asn61, Asn203, Asn239, Asn276, Asn300, Asn350, Asn368, Asn440, Asn471, and Asn491 each carry an N-linked (GlcNAc...) asparagine glycan. A disulfide bond links Cys79 and Cys308. 2 cysteine pairs are disulfide-bonded: Cys420/Cys454 and Cys436/Cys455. Glycine is bound by residues Pro516, Thr518, and Arg523. The chain crosses the membrane as a helical span at residues 560-580; it reads STLWLLVGLSVHVVAVMLYLL. Residues 581-604 lie on the Cytoplasmic side of the membrane; it reads DRFSPFGRFKVNSEEEEEDALTLS. Positions 603–624 are pore-forming; it reads LSSAMWFSWGVLLNSGIGEGAP. The discontinuously helical intramembrane region spans 605-615; the sequence is SAMWFSWGVLL. The Cytoplasmic portion of the chain corresponds to 616 to 627; it reads NSGIGEGAPRSF. A helical membrane pass occupies residues 628-648; it reads SARILGMVWAGFAMIIVASYT. Over 649–811 the chain is Extracellular; sequence ANLAAFLVLD…SNAPATLTFE (163 aa). An N-linked (GlcNAc...) asparagine glycan is attached at Asn674. Positions 688 and 732 each coordinate glycine. Residues Cys744 and Cys798 are joined by a disulfide bond. Residue Asn771 is glycosylated (N-linked (GlcNAc...) asparagine). A helical transmembrane segment spans residues 812–835; sequence NMAGVFMLVAGGIVAGIFLIFIEI. The Cytoplasmic segment spans residues 836–938; sequence AYKRHKDARR…LQLCSRHRES (103 aa). Ser889, Ser890, Ser896, and Ser897 each carry phosphoserine; by PKC. The segment at 889 to 938 is disordered; that stretch reads SSFKRRRSSKDTSTGGGRGALQNQKDTVLPRRAIEREEGQLQLCSRHRES. The span at 916–927 shows a compositional bias: basic and acidic residues; it reads VLPRRAIEREEG.

The protein belongs to the glutamate-gated ion channel (TC 1.A.10.1) family. NR1/GRIN1 subfamily. Heterotetramer; the NMDAR subunits are modular and harbor tiered domains that function in concert to regulate opening and closing of the cation-selective ion channel pore. Forms heterotetrameric channels composed of two GluN1/zeta subunits (GRIN1), and two identical GluN2/epsilon subunits (GRIN2A, GRIN2B, GRIN2C or GRIN2D) or GluN3 subunits (GRIN3A or GRIN3B) (in vitro). Can also form heterotetrameric channels that contain at least two GluN1 subunits and at least two different GluN2 subunits (or a combination of one GluN2 and one GluN3 subunits) (in vitro). In vivo, the subunit composition may vary in function of the expression levels of the different subunits. Found in a complex with GRIN2A or GRIN2B, GRIN3A and PPP2CB. Found in a complex with GRIN2A or GRIN2B and GRIN3B. Interacts with SNX27 (via PDZ domain); the interaction is required for recycling to the plasma membrane when endocytosed and prevent degradation in lysosomes. Interacts with DLG4 and MPDZ. Interacts with LRFN1 and LRFN2. Interacts with MYZAP. Found in a complex with DLG4 and PRR7. Found in a complex with GRIN2B and PRR7. Interacts with PRR7; the interaction is reduced following NMDA receptor activity. Post-translationally, NMDA is probably regulated by C-terminal phosphorylation of an isoform of GRIN1 by PKC. Dephosphorylated on Ser-897 probably by protein phosphatase 2A (PPP2CB). Its phosphorylated state is influenced by the formation of the NMDAR-PPP2CB complex and the NMDAR channel activity.

The protein resides in the cell membrane. It localises to the postsynaptic cell membrane. The protein localises to the postsynaptic density membrane. It is found in the synaptic cell membrane. The enzyme catalyses Ca(2+)(in) = Ca(2+)(out). It catalyses the reaction Na(+)(in) = Na(+)(out). It carries out the reaction K(+)(in) = K(+)(out). NMDA glutamate receptor activity is inhbited by Mg2(+) in a voltage-dependent manner; Mg2(+)-induced blockade occurs only at negative potentials and decreases with membrane depolarization. 7-chlorokynurenate (50 uM) or Zn2(+) (100 uM) partially inhibit the NMDA glutamate receptor activity, while acide 2-amino-5-phosphonovalerique(100 uM) almost completely blocked the NMDA glutamate receptor activity. Dizocilpine (1 uM) results in long lasting and almost complete block of the NMDA glutamate receptor activity. Component of N-methyl-D-aspartate (NMDA) receptors (NMDARs) that function as heterotetrameric, ligand-gated cation channels with high calcium permeability and voltage-dependent block by Mg(2+). NMDARs participate in synaptic plasticity for learning and memory formation by contributing to the long-term potentiation (LTP). Channel activation requires binding of the neurotransmitter L-glutamate to the GluN2 subunit, glycine or D-serine binding to the GluN1 subunit, plus membrane depolarization to eliminate channel inhibition by Mg(2+). NMDARs mediate simultaneously the potasium efflux and the influx of calcium and sodium. Each GluN2 or GluN3 subunit confers differential attributes to channel properties, including activation, deactivation and desensitization kinetics, pH sensitivity, Ca2(+) permeability, and binding to allosteric modulators. This chain is Glutamate receptor ionotropic, NMDA 1, found in Homo sapiens (Human).